The chain runs to 384 residues: Dual specificity protein phosphatase 9 (384 aa).

Ser-16 is subject to Phosphoserine. One can recognise a Rhodanese domain in the interval 18–139 (PRPRLLLLDC…FQAECPHLCE (122 aa)). A Tyrosine-protein phosphatase domain is found at 203 to 346 (FPVQILPNLY…LLDFERSLRL (144 aa)). At Ser-262 the chain carries Phosphoserine. Cys-290 functions as the Phosphocysteine intermediate in the catalytic mechanism. The segment at 348–384 (ERHSQEQGSGGQASAASNPPSFFTTPTSDGAFELAPT) is disordered. Phosphoserine is present on Ser-351. Residues 359-375 (QASAASNPPSFFTTPTS) show a composition bias toward polar residues.

It belongs to the protein-tyrosine phosphatase family. Non-receptor class dual specificity subfamily.

Its subcellular location is the cytoplasm. The catalysed reaction is O-phospho-L-tyrosyl-[protein] + H2O = L-tyrosyl-[protein] + phosphate. The enzyme catalyses O-phospho-L-seryl-[protein] + H2O = L-seryl-[protein] + phosphate. It carries out the reaction O-phospho-L-threonyl-[protein] + H2O = L-threonyl-[protein] + phosphate. Its function is as follows. Inactivates MAP kinases. Has a specificity for the ERK family. The chain is Dual specificity protein phosphatase 9 (DUSP9) from Homo sapiens (Human).